We begin with the raw amino-acid sequence, 238 residues long: Probable RNA/DNA demethylase ALKBH6 (238 aa).

In terms of domain architecture, Fe2OG dioxygenase spans 96 to 227 (PANHVLVNQY…RVSLTIRRVP (132 aa)). Residues N103 and Y105 each contribute to the 2-oxoglutarate site. Fe cation is bound by residues H114, D116, and H182. The 2-oxoglutarate site is built by R218 and S220.

This sequence belongs to the alkB family. Interacts with VCPKMT. The cofactor is Fe(2+).

It localises to the cytoplasm. Its subcellular location is the nucleus. Functionally, probable Fe(2+)/2-oxoglutarate-dependent dioxygenase involved in oxidative demethylation of nucleic acids. Binds nucleic acids with a preference for ssDNA or ssRNA to other types of DNAs. May play a role in nucleic acid damage repair. The chain is Probable RNA/DNA demethylase ALKBH6 (Alkbh6) from Mus musculus (Mouse).